The primary structure comprises 249 residues: L-fucose operon activator (249 aa).

Residues 1–56 (MNYRDELILQWVNQQGKASVIELAQHCDISVETIRRDLNKLANKGLLHRTHGGAVS) form the HTH deoR-type domain. The segment at residues 18-37 (ASVIELAQHCDISVETIRRD) is a DNA-binding region (H-T-H motif).

Functionally, transcriptional activator of the fuc operon. The polypeptide is L-fucose operon activator (fucR) (Haemophilus influenzae (strain ATCC 51907 / DSM 11121 / KW20 / Rd)).